Reading from the N-terminus, the 507-residue chain is Blue light receptor lreB (507 aa).

The region spanning 170 to 234 is the PAS domain; it reads RVLNEMKDML…EEMNECITTT (65 aa). The GATA-type zinc-finger motif lies at 463–488; it reads CTDCGTSDSPEWRKGPEGPKTLCNAC.

Probable transcription factor involved in light regulation. Plays crucial roles in fungal growth and asexual development. Involved in conidiophore formation, sclerotium production, and conidial stress tolerance. Positively regulates the fungal pathogenicity towards maize and aflatoxin B1 production. This Aspergillus flavus protein is Blue light receptor lreB.